We begin with the raw amino-acid sequence, 250 residues long: Geranylgeranylglyceryl phosphate synthase (250 aa).

The Mg(2+) site is built by D26 and S55. Sn-glycerol 1-phosphate contacts are provided by residues 174 to 180 (YLEAGSG), 205 to 206 (GG), and 227 to 228 (GT).

Belongs to the GGGP/HepGP synthase family. Group II subfamily. The cofactor is Mg(2+).

Its subcellular location is the cytoplasm. The catalysed reaction is sn-glycerol 1-phosphate + (2E,6E,10E)-geranylgeranyl diphosphate = sn-3-O-(geranylgeranyl)glycerol 1-phosphate + diphosphate. It functions in the pathway membrane lipid metabolism; glycerophospholipid metabolism. Functionally, prenyltransferase that catalyzes the transfer of the geranylgeranyl moiety of geranylgeranyl diphosphate (GGPP) to the C3 hydroxyl of sn-glycerol-1-phosphate (G1P). This reaction is the first ether-bond-formation step in the biosynthesis of archaeal membrane lipids. In Nitrosopumilus maritimus (strain SCM1), this protein is Geranylgeranylglyceryl phosphate synthase.